We begin with the raw amino-acid sequence, 745 residues long: Cellulose synthase-like protein E2 (745 aa).

The span at 1–14 (MAGSGGGVVSGGRQ) shows a compositional bias: gly residues. The tract at residues 1-20 (MAGSGGGVVSGGRQRGPPLF) is disordered. The next 2 helical transmembrane spans lie at 29-49 (AMAA…LIWL) and 66-86 (WAWL…VLTL). Active-site residues include Asp155 and Asp458. 5 helical membrane-spanning segments follow: residues 541-561 (FPTL…ISLF), 568-588 (WFIP…AESL), 658-678 (AMFV…VLGI), 686-706 (GPGG…IVAI), and 723-743 (LPAS…ILSI).

Belongs to the glycosyltransferase 2 family. Plant cellulose synthase-like E subfamily.

The protein localises to the golgi apparatus membrane. Thought to be a Golgi-localized beta-glycan synthase that polymerize the backbones of noncellulosic polysaccharides (hemicelluloses) of plant cell wall. This chain is Cellulose synthase-like protein E2 (CSLE2), found in Oryza sativa subsp. japonica (Rice).